The following is a 170-amino-acid chain: Peptide deformylase (170 aa).

Residues cysteine 94 and histidine 136 each contribute to the Fe cation site. Glutamate 137 is a catalytic residue. Residue histidine 140 participates in Fe cation binding.

It belongs to the polypeptide deformylase family. Fe(2+) serves as cofactor.

It carries out the reaction N-terminal N-formyl-L-methionyl-[peptide] + H2O = N-terminal L-methionyl-[peptide] + formate. Its function is as follows. Removes the formyl group from the N-terminal Met of newly synthesized proteins. Requires at least a dipeptide for an efficient rate of reaction. N-terminal L-methionine is a prerequisite for activity but the enzyme has broad specificity at other positions. The chain is Peptide deformylase from Stenotrophomonas maltophilia (strain R551-3).